The sequence spans 141 residues: MAIERTLSIIKPDAVAKNVIGKIVSRFEAAGLKIVAAKLVHLSRNEAEQFYSVHKERPFFKDLVDFMISGPVFVQVLEGENAIAKNRDLMGATDPKKAAPGTIRADFADSIDANAVHGSDAPETAANEVAFFFAGLNVYAR.

ATP is bound by residues Lys11, Phe59, Arg87, Thr93, Arg104, and Asn114. His117 serves as the catalytic Pros-phosphohistidine intermediate.

This sequence belongs to the NDK family. As to quaternary structure, homotetramer. It depends on Mg(2+) as a cofactor.

It localises to the cytoplasm. The catalysed reaction is a 2'-deoxyribonucleoside 5'-diphosphate + ATP = a 2'-deoxyribonucleoside 5'-triphosphate + ADP. The enzyme catalyses a ribonucleoside 5'-diphosphate + ATP = a ribonucleoside 5'-triphosphate + ADP. In terms of biological role, major role in the synthesis of nucleoside triphosphates other than ATP. The ATP gamma phosphate is transferred to the NDP beta phosphate via a ping-pong mechanism, using a phosphorylated active-site intermediate. This Variovorax paradoxus (strain S110) protein is Nucleoside diphosphate kinase.